The sequence spans 281 residues: Elongation factor Ts (281 aa).

Positions 86 to 89 (TDFV) are involved in Mg(2+) ion dislocation from EF-Tu.

The protein belongs to the EF-Ts family.

The protein resides in the cytoplasm. In terms of biological role, associates with the EF-Tu.GDP complex and induces the exchange of GDP to GTP. It remains bound to the aminoacyl-tRNA.EF-Tu.GTP complex up to the GTP hydrolysis stage on the ribosome. The chain is Elongation factor Ts from Beutenbergia cavernae (strain ATCC BAA-8 / DSM 12333 / CCUG 43141 / JCM 11478 / NBRC 16432 / NCIMB 13614 / HKI 0122).